The chain runs to 333 residues: Glycerol-3-phosphate dehydrogenase [NAD(P)+] (333 aa).

Residues Phe-19, Arg-40, Arg-41, and Lys-113 each contribute to the NADPH site. Sn-glycerol 3-phosphate is bound by residues Lys-113 and Gly-141. Ala-145 contributes to the NADPH binding site. Sn-glycerol 3-phosphate contacts are provided by Lys-196, Asp-249, Ser-259, Arg-260, and Asn-261. Lys-196 functions as the Proton acceptor in the catalytic mechanism. Arg-260 is a binding site for NADPH. The NADPH site is built by Val-282 and Glu-283.

Belongs to the NAD-dependent glycerol-3-phosphate dehydrogenase family.

The protein resides in the cytoplasm. The enzyme catalyses sn-glycerol 3-phosphate + NAD(+) = dihydroxyacetone phosphate + NADH + H(+). It carries out the reaction sn-glycerol 3-phosphate + NADP(+) = dihydroxyacetone phosphate + NADPH + H(+). It participates in membrane lipid metabolism; glycerophospholipid metabolism. Functionally, catalyzes the reduction of the glycolytic intermediate dihydroxyacetone phosphate (DHAP) to sn-glycerol 3-phosphate (G3P), the key precursor for phospholipid synthesis. This is Glycerol-3-phosphate dehydrogenase [NAD(P)+] from Sinorhizobium fredii (strain NBRC 101917 / NGR234).